A 193-amino-acid polypeptide reads, in one-letter code: Probable nicotinate-nucleotide adenylyltransferase (193 aa).

It belongs to the NadD family.

It catalyses the reaction nicotinate beta-D-ribonucleotide + ATP + H(+) = deamido-NAD(+) + diphosphate. The protein operates within cofactor biosynthesis; NAD(+) biosynthesis; deamido-NAD(+) from nicotinate D-ribonucleotide: step 1/1. Its function is as follows. Catalyzes the reversible adenylation of nicotinate mononucleotide (NaMN) to nicotinic acid adenine dinucleotide (NaAD). This chain is Probable nicotinate-nucleotide adenylyltransferase, found in Coprothermobacter proteolyticus (strain ATCC 35245 / DSM 5265 / OCM 4 / BT).